We begin with the raw amino-acid sequence, 339 residues long: Retinol dehydrogenase 10-A (339 aa).

The chain crosses the membrane as a helical; Signal-anchor span at residues 3 to 23; it reads IFVEFFLVMLKVCWAIVMAGF. 40-64 serves as a coordination point for NADP(+); sequence VITGAGGGLGRLFAKEFARRRATLV. Residue Ser-195 participates in substrate binding. The active-site Proton acceptor is the Tyr-208.

The protein belongs to the short-chain dehydrogenases/reductases (SDR) family.

It localises to the microsome membrane. The protein localises to the endoplasmic reticulum membrane. The enzyme catalyses all-trans-retinol + NADP(+) = all-trans-retinal + NADPH + H(+). The protein operates within cofactor metabolism; retinol metabolism. In terms of biological role, retinol dehydrogenase with a clear preference for NADP. Converts all-trans-retinol to all-trans-retinal. Has no detectable activity towards 11-cis-retinol, 9-cis-retinol and 13-cis-retinol. This Danio rerio (Zebrafish) protein is Retinol dehydrogenase 10-A (rdh10a).